The primary structure comprises 295 residues: Putative xyloglucan endotransglucosylase/hydrolase protein 1 (295 aa).

The signal sequence occupies residues 1–24 (MNKMEYLSIFGFVSVLYLIIRVDA). Residues 27 to 225 (YEVNGIDQSK…WSLAPFKANF (199 aa)) enclose the GH16 domain. The Nucleophile role is filled by Glu113. Glu117 acts as the Proton donor in catalysis. Residues Glu117, 129–131 (QTN), and 139–141 (NRE) contribute to the xyloglucan site. N-linked (GlcNAc...) asparagine glycosylation occurs at Asn180. Xyloglucan-binding positions include 204-205 (NW) and Gly209. N-linked (GlcNAc...) asparagine glycosylation is found at Asn215 and Asn229. 2 disulfide bridges follow: Cys233-Cys242 and Cys278-Cys291. Arg283 serves as a coordination point for xyloglucan.

It belongs to the glycosyl hydrolase 16 family. XTH group 1 subfamily. Contains at least one intrachain disulfide bond essential for its enzymatic activity.

It localises to the secreted. The protein resides in the cell wall. It is found in the extracellular space. The protein localises to the apoplast. The catalysed reaction is breaks a beta-(1-&gt;4) bond in the backbone of a xyloglucan and transfers the xyloglucanyl segment on to O-4 of the non-reducing terminal glucose residue of an acceptor, which can be a xyloglucan or an oligosaccharide of xyloglucan.. May catalyze xyloglucan endohydrolysis (XEH) and/or endotransglycosylation (XET). Cleaves and religates xyloglucan polymers, an essential constituent of the primary cell wall, and thereby participates in cell wall construction of growing tissues. This Arabidopsis thaliana (Mouse-ear cress) protein is Putative xyloglucan endotransglucosylase/hydrolase protein 1 (XTH1).